The following is a 651-amino-acid chain: Translation factor GUF1 homolog, mitochondrial (651 aa).

Residues 1-26 (MAVTRAAAPMVGNCSSAMLIIGRRYF) constitute a mitochondrion transit peptide. A tr-type G domain is found at 51 to 228 (KKIRNFGIVA…AVVERLPPPK (178 aa)). GTP-binding positions include 60–67 (AHVDHGKS), 121–125 (DTPGH), and 175–178 (NKVD).

Belongs to the TRAFAC class translation factor GTPase superfamily. Classic translation factor GTPase family. LepA subfamily.

The protein resides in the mitochondrion inner membrane. The catalysed reaction is GTP + H2O = GDP + phosphate + H(+). In terms of biological role, promotes mitochondrial protein synthesis. May act as a fidelity factor of the translation reaction, by catalyzing a one-codon backward translocation of tRNAs on improperly translocated ribosomes. Binds to mitochondrial ribosomes in a GTP-dependent manner. The polypeptide is Translation factor GUF1 homolog, mitochondrial (Brugia malayi (Filarial nematode worm)).